The sequence spans 276 residues: Thiazole synthase (276 aa).

The Schiff-base intermediate with DXP role is filled by lysine 117. 1-deoxy-D-xylulose 5-phosphate is bound by residues glycine 178, 204 to 205 (AG), and 226 to 227 (NT).

Belongs to the ThiG family. Homotetramer. Forms heterodimers with either ThiH or ThiS.

The protein localises to the plastid. Its subcellular location is the chloroplast. The enzyme catalyses [ThiS sulfur-carrier protein]-C-terminal-Gly-aminoethanethioate + 2-iminoacetate + 1-deoxy-D-xylulose 5-phosphate = [ThiS sulfur-carrier protein]-C-terminal Gly-Gly + 2-[(2R,5Z)-2-carboxy-4-methylthiazol-5(2H)-ylidene]ethyl phosphate + 2 H2O + H(+). It functions in the pathway cofactor biosynthesis; thiamine diphosphate biosynthesis. Functionally, catalyzes the rearrangement of 1-deoxy-D-xylulose 5-phosphate (DXP) to produce the thiazole phosphate moiety of thiamine. Sulfur is provided by the thiocarboxylate moiety of the carrier protein ThiS. In vitro, sulfur can be provided by H(2)S. This chain is Thiazole synthase, found in Gracilaria tenuistipitata var. liui (Red alga).